A 421-amino-acid polypeptide reads, in one-letter code: tRNA (guanine-N(7)-)-methyltransferase non-catalytic subunit TRM82 (421 aa).

3 WD repeats span residues 72-112 (AVYS…EDPE), 170-212 (GHVS…IVDK), and 216-258 (GHKE…SQYS).

The protein belongs to the WD repeat TRM82 family. In terms of assembly, forms a heterodimer with the catalytic subunit TRM8.

The protein localises to the nucleus. It functions in the pathway tRNA modification; N(7)-methylguanine-tRNA biosynthesis. Its function is as follows. Required for the formation of N(7)-methylguanine at position 46 (m7G46) in tRNA. In the complex, it is required to stabilize and induce conformational changes of the catalytic subunit. This chain is tRNA (guanine-N(7)-)-methyltransferase non-catalytic subunit TRM82, found in Candida glabrata (strain ATCC 2001 / BCRC 20586 / JCM 3761 / NBRC 0622 / NRRL Y-65 / CBS 138) (Yeast).